A 1027-amino-acid polypeptide reads, in one-letter code: Pro-apoptotic serine protease nma111 (1027 aa).

The tract at residues 1 to 46 is disordered; that stretch reads MDLNGDAGAKRKRSSIVPAERPAKHLKPESSALTPGDSTPANGTVY. The segment covering 31–42 has biased composition (polar residues); the sequence is SALTPGDSTPAN. Positions 81–265 are serine protease; the sequence is VVSIHFCQTC…AATDYFLPLD (185 aa). Active-site charge relay system residues include histidine 119, aspartate 150, and serine 232. PDZ domains are found at residues 288–373 and 875–956; these read QWIL…LLVQ and VFCG…VTFD. The tract at residues 991–1027 is disordered; it reads HNKSKHKDGIAPDAANLNPDAMEQGYDGASDIEPEAE.

It belongs to the peptidase S1C family.

It localises to the nucleus. Its function is as follows. Nuclear serine protease which mediates apoptosis. The protein is Pro-apoptotic serine protease nma111 (nma111) of Aspergillus oryzae (strain ATCC 42149 / RIB 40) (Yellow koji mold).